The primary structure comprises 255 residues: Hydroxyacylglutathione hydrolase (255 aa).

Positions 56, 58, 60, 61, 114, 133, and 171 each coordinate Zn(2+).

This sequence belongs to the metallo-beta-lactamase superfamily. Glyoxalase II family. Monomer. Zn(2+) serves as cofactor.

The catalysed reaction is an S-(2-hydroxyacyl)glutathione + H2O = a 2-hydroxy carboxylate + glutathione + H(+). Its pathway is secondary metabolite metabolism; methylglyoxal degradation; (R)-lactate from methylglyoxal: step 2/2. In terms of biological role, thiolesterase that catalyzes the hydrolysis of S-D-lactoyl-glutathione to form glutathione and D-lactic acid. The polypeptide is Hydroxyacylglutathione hydrolase (Bradyrhizobium diazoefficiens (strain JCM 10833 / BCRC 13528 / IAM 13628 / NBRC 14792 / USDA 110)).